The chain runs to 180 residues: Large ribosomal subunit protein uL5c (180 aa).

It belongs to the universal ribosomal protein uL5 family. In terms of assembly, part of the 50S ribosomal subunit; contacts the 5S rRNA.

The protein localises to the plastid. The protein resides in the chloroplast. In terms of biological role, binds 5S rRNA, forms part of the central protuberance of the 50S subunit. This Oedogonium cardiacum (Filamentous green alga) protein is Large ribosomal subunit protein uL5c (rpl5).